The following is a 643-amino-acid chain: Nicastrin (643 aa).

An N-terminal signal peptide occupies residues 1–20 (MRFKNVLVLLLLLVFSVINS). At 21-611 (EPSAPATISD…VFKIGNSTTE (591 aa)) the chain is on the extracellular side. C42 and C54 are joined by a disulfide. N96 and N166 each carry an N-linked (GlcNAc...) asparagine glycan. Intrachain disulfides connect C204–C210 and C308–C318. Residues N333 and N385 are each glycosylated (N-linked (GlcNAc...) asparagine). Disulfide bonds link C479-C486, C540-C551, and C546-C556. N584 carries N-linked (GlcNAc...) asparagine glycosylation. A helical transmembrane segment spans residues 612–632 (IWFLVSGLIELLVSIGLILYV). Residues 633–643 (KKFLSNRYKLL) are Cytoplasmic-facing.

It belongs to the nicastrin family. Component of the gamma-secretase complex, a complex composed of a presenilin homodimer, nicastrin, aph1 and pen2.

Its subcellular location is the membrane. Its function is as follows. Essential subunit of the gamma-secretase complex, an endoprotease complex that catalyzes the intramembrane cleavage of integral membrane proteins such as Notch receptors and APP (amyloid-beta precursor protein). This Dictyostelium purpureum (Slime mold) protein is Nicastrin.